Reading from the N-terminus, the 218-residue chain is DNA endonuclease I-CeuI (218 aa).

Gly65 and Glu66 together coordinate Mg(2+). The tract at residues 71 to 75 (ISTKK) is interaction with DNA. Asp86 provides a ligand contact to Mg(2+). Interaction with DNA regions lie at residues 90–94 (NVTQH), 114–116 (RHK), and 191–199 (KQQGQSNEG).

Belongs to the LAGLIDADG endonuclease family. In terms of assembly, homodimer. Requires Mg(2+) as cofactor.

Its subcellular location is the plastid. It is found in the chloroplast. Endonuclease involved in intron homing. Recognizes a degenerate sequence of 17-19 bp to produce a staggered cut 5 bp downstream from the CeLSU.5 intron insertion site. The polypeptide is DNA endonuclease I-CeuI (Chlamydomonas moewusii (Chlamydomonas eugametos)).